Consider the following 387-residue polypeptide: Delta(12)-acyl-lipid-desaturase (387 aa).

The disordered stretch occupies residues 1–31; the sequence is MGAGGRMTVPNKWEGEGDEKSQKPVQRVPSA. Residues 13–22 show a composition bias toward basic and acidic residues; it reads WEGEGDEKSQ. A run of 2 helical transmembrane segments spans residues 58-78 and 88-108; these read SYVL…TTYI and AAWP…WVIA. Residues 109–113 carry the Histidine box-1 motif; sequence HECGH. Residues 121-141 form a helical membrane-spanning segment; it reads WVDDCVGLVLHSALLVPYFSW. The Histidine box-2 signature appears at 145–149; the sequence is HRRHH. A run of 3 helical transmembrane segments spans residues 183-203, 229-249, and 251-271; these read VMTL…LNVS, IYIS…IAAA, and GLAW…AFLV. Residues 319 to 323 carry the Histidine box-3 motif; it reads HVAHH.

This sequence belongs to the fatty acid desaturase type 1 family.

Its subcellular location is the membrane. The protein operates within lipid metabolism; polyunsaturated fatty acid biosynthesis. In terms of biological role, delta(12)-fatty acid desaturase producing in a heterologous system linoleic acid (18:2(9Z,12Z)) and to a lower extent hexadecadienoic acid (16:2(9Z,12Z)). The protein is Delta(12)-acyl-lipid-desaturase of Punica granatum (Pomegranate).